The primary structure comprises 127 residues: Aspartate 1-decarboxylase (127 aa).

Residue S25 is the Schiff-base intermediate with substrate; via pyruvic acid of the active site. A Pyruvic acid (Ser) modification is found at S25. Residue T57 coordinates substrate. Residue Y58 is the Proton donor of the active site. 73–75 (GAA) is a substrate binding site.

Belongs to the PanD family. In terms of assembly, heterooctamer of four alpha and four beta subunits. The cofactor is pyruvate. Post-translationally, is synthesized initially as an inactive proenzyme, which is activated by self-cleavage at a specific serine bond to produce a beta-subunit with a hydroxyl group at its C-terminus and an alpha-subunit with a pyruvoyl group at its N-terminus.

Its subcellular location is the cytoplasm. The enzyme catalyses L-aspartate + H(+) = beta-alanine + CO2. It participates in cofactor biosynthesis; (R)-pantothenate biosynthesis; beta-alanine from L-aspartate: step 1/1. Functionally, catalyzes the pyruvoyl-dependent decarboxylation of aspartate to produce beta-alanine. In Clostridium acetobutylicum (strain ATCC 824 / DSM 792 / JCM 1419 / IAM 19013 / LMG 5710 / NBRC 13948 / NRRL B-527 / VKM B-1787 / 2291 / W), this protein is Aspartate 1-decarboxylase.